A 224-amino-acid polypeptide reads, in one-letter code: 7-cyano-7-deazaguanine synthase (224 aa).

Leu10–Val20 contributes to the ATP binding site. Cys189, Cys199, Cys202, and Cys205 together coordinate Zn(2+).

The protein belongs to the QueC family. It depends on Zn(2+) as a cofactor.

The catalysed reaction is 7-carboxy-7-deazaguanine + NH4(+) + ATP = 7-cyano-7-deazaguanine + ADP + phosphate + H2O + H(+). Its pathway is purine metabolism; 7-cyano-7-deazaguanine biosynthesis. Catalyzes the ATP-dependent conversion of 7-carboxy-7-deazaguanine (CDG) to 7-cyano-7-deazaguanine (preQ(0)). The sequence is that of 7-cyano-7-deazaguanine synthase from Pseudomonas putida (strain ATCC 700007 / DSM 6899 / JCM 31910 / BCRC 17059 / LMG 24140 / F1).